Consider the following 125-residue polypeptide: Secretion system apparatus protein SsaO (125 aa).

The protein is Secretion system apparatus protein SsaO (ssaO) of Salmonella typhimurium (strain LT2 / SGSC1412 / ATCC 700720).